The sequence spans 358 residues: tRNA (guanine-N(7)-)-methyltransferase (358 aa).

The interval 1 to 29 is disordered; that stretch reads MTPPPPKRQKRDEYRKATAEATSQSGASD. Residues G99 and 122-123 contribute to the S-adenosyl-L-methionine site; that span reads EI. Residues 151–186 show a composition bias toward low complexity; sequence TATAASETPSQQQAQIDGKQANANAAADAASPAPST. Positions 151-194 are disordered; the sequence is TATAASETPSQQQAQIDGKQANANAAADAASPAPSTDTEHMPTT. S-adenosyl-L-methionine is bound by residues 209-210 and C229; that span reads NT. The active site involves D232. 330–332 serves as a coordination point for S-adenosyl-L-methionine; sequence TEE.

Belongs to the class I-like SAM-binding methyltransferase superfamily. TrmB family. Forms a complex with trm82.

Its subcellular location is the nucleus. The enzyme catalyses guanosine(46) in tRNA + S-adenosyl-L-methionine = N(7)-methylguanosine(46) in tRNA + S-adenosyl-L-homocysteine. The protein operates within tRNA modification; N(7)-methylguanine-tRNA biosynthesis. In terms of biological role, catalyzes the formation of N(7)-methylguanine at position 46 (m7G46) in tRNA. The chain is tRNA (guanine-N(7)-)-methyltransferase (trm8) from Aspergillus fumigatus (strain CBS 144.89 / FGSC A1163 / CEA10) (Neosartorya fumigata).